We begin with the raw amino-acid sequence, 323 residues long: o-succinylbenzoate synthase (323 aa).

The active-site Proton donor is Lys-134. Mg(2+) contacts are provided by Asp-162, Glu-191, and Asp-214. Lys-236 functions as the Proton acceptor in the catalytic mechanism.

Belongs to the mandelate racemase/muconate lactonizing enzyme family. MenC type 1 subfamily. It depends on a divalent metal cation as a cofactor.

It catalyses the reaction (1R,6R)-6-hydroxy-2-succinyl-cyclohexa-2,4-diene-1-carboxylate = 2-succinylbenzoate + H2O. The protein operates within quinol/quinone metabolism; 1,4-dihydroxy-2-naphthoate biosynthesis; 1,4-dihydroxy-2-naphthoate from chorismate: step 4/7. Its pathway is quinol/quinone metabolism; menaquinone biosynthesis. Functionally, converts 2-succinyl-6-hydroxy-2,4-cyclohexadiene-1-carboxylate (SHCHC) to 2-succinylbenzoate (OSB). This is o-succinylbenzoate synthase from Yersinia pseudotuberculosis serotype O:1b (strain IP 31758).